Consider the following 242-residue polypeptide: NAD-dependent protein deacetylase (242 aa).

One can recognise a Deacetylase sirtuin-type domain in the interval 1-242 (MQQFEEVHSI…EFVEGLSSRK (242 aa)). Alanine 23, threonine 27, phenylalanine 34, arginine 35, glutamine 102, isoleucine 104, aspartate 105, and histidine 120 together coordinate NAD(+). Residue phenylalanine 34 participates in nicotinamide binding. Nicotinamide-binding residues include isoleucine 104 and aspartate 105. The active-site Proton acceptor is the histidine 120. 4 residues coordinate Zn(2+): cysteine 128, cysteine 131, cysteine 148, and cysteine 151. The NAD(+) site is built by threonine 187, serine 188, asparagine 213, and isoleucine 231.

It belongs to the sirtuin family. Class U subfamily. Zn(2+) serves as cofactor.

Its subcellular location is the cytoplasm. The catalysed reaction is N(6)-acetyl-L-lysyl-[protein] + NAD(+) + H2O = 2''-O-acetyl-ADP-D-ribose + nicotinamide + L-lysyl-[protein]. Its function is as follows. NAD-dependent protein deacetylase which modulates the activities of several enzymes which are inactive in their acetylated form. The protein is NAD-dependent protein deacetylase of Bacillus cereus (strain ATCC 10987 / NRS 248).